The following is a 273-amino-acid chain: Large ribosomal subunit protein uL29m (273 aa).

A compositionally biased stretch (basic and acidic residues) spans 247-258 (PLRHDRWEKGQE). A disordered region spans residues 247–273 (PLRHDRWEKGQEENSGGETEDGNAPSN).

Belongs to the universal ribosomal protein uL29 family. As to quaternary structure, component of the mitochondrial large ribosomal subunit. Mature mitochondrial ribosomes consist of a small (37S) and a large (54S) subunit. The 37S subunit contains at least 33 different proteins and 1 molecule of RNA (15S). The 54S subunit contains at least 45 different proteins and 1 molecule of RNA (21S).

Its subcellular location is the mitochondrion. The polypeptide is Large ribosomal subunit protein uL29m (mrpl4) (Aspergillus niger (strain ATCC MYA-4892 / CBS 513.88 / FGSC A1513)).